The following is an 831-amino-acid chain: Periplasmic nitrate reductase (831 aa).

The segment at residues 1–29 (MTLTRRDLIKAQAAATAAAAAGLPVSALA) is a signal peptide (tat-type signal). The region spanning 41–97 (IRWSKAPCRFCGTGCGVMVGTRDGQVVATHGDTQAEVNRGLNCVKGYFLSKIMYGED) is the 4Fe-4S Mo/W bis-MGD-type domain. Positions 48, 51, 55, and 83 each coordinate [4Fe-4S] cluster. Residues K85, Q152, N177, C181, 214–221 (WGSNMAEM), 245–249 (STFTH), 264–266 (GTD), M375, Q379, N485, 511–512 (SD), K534, D561, and 721–730 (TGRVLEHWHS) each bind Mo-bis(molybdopterin guanine dinucleotide). W797 provides a ligand contact to substrate. The Mo-bis(molybdopterin guanine dinucleotide) site is built by N805 and K822.

It belongs to the prokaryotic molybdopterin-containing oxidoreductase family. NasA/NapA/NarB subfamily. In terms of assembly, component of the periplasmic nitrate reductase NapAB complex composed of NapA and NapB. [4Fe-4S] cluster is required as a cofactor. The cofactor is Mo-bis(molybdopterin guanine dinucleotide). Predicted to be exported by the Tat system. The position of the signal peptide cleavage has not been experimentally proven.

The protein resides in the periplasm. It carries out the reaction 2 Fe(II)-[cytochrome] + nitrate + 2 H(+) = 2 Fe(III)-[cytochrome] + nitrite + H2O. Functionally, catalytic subunit of the periplasmic nitrate reductase complex NapAB. Receives electrons from NapB and catalyzes the reduction of nitrate to nitrite. The protein is Periplasmic nitrate reductase of Cereibacter sphaeroides (strain ATCC 17023 / DSM 158 / JCM 6121 / CCUG 31486 / LMG 2827 / NBRC 12203 / NCIMB 8253 / ATH 2.4.1.) (Rhodobacter sphaeroides).